The primary structure comprises 355 residues: Holliday junction branch migration complex subunit RuvB (355 aa).

The disordered stretch occupies residues 1–43 (MEEMDDFTVRRGEREDITGAAGPPEERPLDPAAFEEDDEPTLR). Residues 4–203 (MDDFTVRRGE…FGFSARLDYY (200 aa)) are large ATPase domain (RuvB-L). The span at 7–17 (FTVRRGEREDI) shows a compositional bias: basic and acidic residues. ATP is bound by residues Leu-42, Arg-43, Gly-84, Lys-87, Thr-88, Ser-89, 150-152 (EDF), Arg-193, Tyr-203, and Arg-240. Thr-88 contributes to the Mg(2+) binding site. The small ATPAse domain (RuvB-S) stretch occupies residues 204–274 (EPHELEKIVV…TANAALEMQG (71 aa)). The interval 277-355 (HLGLDRTDRE…HLGFPVRDGG (79 aa)) is head domain (RuvB-H). Arg-313, Arg-332, and Arg-337 together coordinate DNA.

It belongs to the RuvB family. As to quaternary structure, homohexamer. Forms an RuvA(8)-RuvB(12)-Holliday junction (HJ) complex. HJ DNA is sandwiched between 2 RuvA tetramers; dsDNA enters through RuvA and exits via RuvB. An RuvB hexamer assembles on each DNA strand where it exits the tetramer. Each RuvB hexamer is contacted by two RuvA subunits (via domain III) on 2 adjacent RuvB subunits; this complex drives branch migration. In the full resolvosome a probable DNA-RuvA(4)-RuvB(12)-RuvC(2) complex forms which resolves the HJ.

It localises to the cytoplasm. The enzyme catalyses ATP + H2O = ADP + phosphate + H(+). The RuvA-RuvB-RuvC complex processes Holliday junction (HJ) DNA during genetic recombination and DNA repair, while the RuvA-RuvB complex plays an important role in the rescue of blocked DNA replication forks via replication fork reversal (RFR). RuvA specifically binds to HJ cruciform DNA, conferring on it an open structure. The RuvB hexamer acts as an ATP-dependent pump, pulling dsDNA into and through the RuvAB complex. RuvB forms 2 homohexamers on either side of HJ DNA bound by 1 or 2 RuvA tetramers; 4 subunits per hexamer contact DNA at a time. Coordinated motions by a converter formed by DNA-disengaged RuvB subunits stimulates ATP hydrolysis and nucleotide exchange. Immobilization of the converter enables RuvB to convert the ATP-contained energy into a lever motion, pulling 2 nucleotides of DNA out of the RuvA tetramer per ATP hydrolyzed, thus driving DNA branch migration. The RuvB motors rotate together with the DNA substrate, which together with the progressing nucleotide cycle form the mechanistic basis for DNA recombination by continuous HJ branch migration. Branch migration allows RuvC to scan DNA until it finds its consensus sequence, where it cleaves and resolves cruciform DNA. This Rubrobacter xylanophilus (strain DSM 9941 / JCM 11954 / NBRC 16129 / PRD-1) protein is Holliday junction branch migration complex subunit RuvB.